Here is a 376-residue protein sequence, read N- to C-terminus: UDP-N-acetylglucosamine 2-epimerase (376 aa).

Substrate contacts are provided by residues arginine 10, lysine 15, aspartate 95, glutamate 117, histidine 213, glutamine 271, phenylalanine 276, 290–292 (SGG), glutamate 296, and arginine 313.

It belongs to the UDP-N-acetylglucosamine 2-epimerase family. As to quaternary structure, homodimer.

The protein resides in the cytoplasm. The catalysed reaction is UDP-N-acetyl-alpha-D-glucosamine = UDP-N-acetyl-alpha-D-mannosamine. It functions in the pathway bacterial outer membrane biogenesis; enterobacterial common antigen biosynthesis. Functionally, catalyzes the reversible epimerization at C-2 of UDP-N-acetylglucosamine (UDP-GlcNAc) and thereby provides bacteria with UDP-N-acetylmannosamine (UDP-ManNAc), the activated donor of ManNAc residues. In Escherichia coli O157:H7, this protein is UDP-N-acetylglucosamine 2-epimerase.